Here is a 347-residue protein sequence, read N- to C-terminus: Olfactory receptor 6J1 (347 aa).

The Extracellular portion of the chain corresponds to 1-24 (MGNWTAAVTEFVLLGFSLSREVEL). A glycan (N-linked (GlcNAc...) asparagine) is linked at Asn3. A helical transmembrane segment spans residues 25-45 (LLLVLLLPTFLLTLLGNLLII). At 46–53 (STVLSCSR) the chain is on the cytoplasmic side. A helical transmembrane segment spans residues 54-74 (LHTPMYFFLCNLSILDILFTS). The Extracellular segment spans residues 75–98 (VISPKVLANLGSRDKTISFAGCIT). A disulfide bridge connects residues Cys96 and Cys188. Residues 99–119 (QCYFYFFLGTVEFLLLTVMSY) traverse the membrane as a helical segment. Topologically, residues 120–138 (DRYATICCPLRYTTIMRPS) are cytoplasmic. The chain crosses the membrane as a helical span at residues 139–159 (VCIGTVVFSWVGGFLSVLFPT). Residues 160 to 196 (ILISQLPFCGSNIINHFFCDSGPLLALACADTTAIEL) are Extracellular-facing. The chain crosses the membrane as a helical span at residues 197 to 216 (MDFMLSSMVILCCIVLVAYS). Topologically, residues 217–236 (YTYIILTIVRIPSASGRKKA) are cytoplasmic. Residues 237–257 (FNTCASHLTIVIISSGITVFI) traverse the membrane as a helical segment. The Extracellular segment spans residues 258–270 (YVTPSQKEYLEIN). The chain crosses the membrane as a helical span at residues 271-291 (KIPLVLSSVVTPFLNPFIYTL). At 292-347 (RNDTVQGVLRDVWVRVRGVFEKRMRAVLRSRLSSNKDHQGRACSSPPCVYSVKLQC) the chain is on the cytoplasmic side.

It belongs to the G-protein coupled receptor 1 family.

It localises to the cell membrane. In terms of biological role, odorant receptor. The chain is Olfactory receptor 6J1 (OR6J1) from Homo sapiens (Human).